Consider the following 886-residue polypeptide: CRM-domain containing factor CFM3, chloroplastic/mitochondrial (886 aa).

The N-terminal 70 residues, 1–70 (MAAAAMAISP…LDLRPEPSPS (70 aa)), are a transit peptide targeting the chloroplast and mitochondrion. 2 disordered regions span residues 56–84 (RPAS…TSRS) and 269–291 (TKGT…PPGH). 3 consecutive CRM domains span residues 174–270 (LTLP…EPTK), 378–475 (PSLS…ELAE), and 590–690 (ETIT…SKLR). The span at 270–281 (KGTSKNTQTLGM) shows a compositional bias: polar residues. Residues 771–886 (SFDNSVAVQN…QSTELTNTCS (116 aa)) form a disordered region. The span at 793-827 (NSDDEGDYSDEDDDEDDDNDEEDGFDYENDDEDDV) shows a compositional bias: acidic residues. 2 stretches are compositionally biased toward polar residues: residues 841 to 852 (DFGSSDSENYVS) and 869 to 886 (DSRN…NTCS).

Interacts with RNA. Part of large ribonucleo-protein particles that contain CAF1 and/or CAF2, and RNC1.

It is found in the plastid. The protein localises to the chloroplast. Its subcellular location is the mitochondrion. Binds specific group II introns in chloroplasts and facilitates their splicing. Acts on subgroup IIB introns. The substrates of the subgroup IIB also require the CRM domain proteins CAF1 or CAF2, with a simultaneous binding of CFM3 and CAF1 or CAF2. May influence the biogenesis of the mitochondrial small ribosomal subunit. This chain is CRM-domain containing factor CFM3, chloroplastic/mitochondrial, found in Oryza sativa subsp. japonica (Rice).